Consider the following 366-residue polypeptide: Probable trehalose-phosphate phosphatase 3 (366 aa).

Belongs to the trehalose phosphatase family. It depends on a divalent metal cation as a cofactor.

The catalysed reaction is alpha,alpha-trehalose 6-phosphate + H2O = alpha,alpha-trehalose + phosphate. The protein operates within glycan biosynthesis; trehalose biosynthesis. Functionally, removes the phosphate from trehalose 6-phosphate to produce free trehalose. Trehalose accumulation in plant may improve abiotic stress tolerance. In Oryza sativa subsp. japonica (Rice), this protein is Probable trehalose-phosphate phosphatase 3 (TPP3).